The primary structure comprises 181 residues: HGPRTase-like protein 1 (181 aa).

It belongs to the purine/pyrimidine phosphoribosyltransferase family. Archaeal HPRT subfamily.

In terms of biological role, may catalyze a purine salvage reaction, the substrate is unknown. In Halalkalicoccus jeotgali (strain DSM 18796 / CECT 7217 / JCM 14584 / KCTC 4019 / B3), this protein is HGPRTase-like protein 1.